A 537-amino-acid polypeptide reads, in one-letter code: CTP synthase (537 aa).

Residues 1–265 are amidoligase domain; it reads MTKYIFVTGG…GKYLTKRLKL (265 aa). A CTP-binding site is contributed by Ser-13. UTP is bound at residue Ser-13. 14-19 lines the ATP pocket; sequence GLGKGI. Tyr-54 contributes to the L-glutamine binding site. Asp-71 contacts ATP. Asp-71 and Glu-139 together coordinate Mg(2+). Residues 146–148, 186–191, and Lys-222 each bind CTP; these read DIE and KTKPTQ. Residues 186–191 and Lys-222 contribute to the UTP site; that span reads KTKPTQ. Residues 290–532 enclose the Glutamine amidotransferase type-1 domain; the sequence is EIAIVGKYVK…VRAAKEYKQE (243 aa). An L-glutamine-binding site is contributed by Gly-351. Cys-378 serves as the catalytic Nucleophile; for glutamine hydrolysis. Residues 379 to 382, Glu-402, and Arg-459 contribute to the L-glutamine site; that span reads FGFQ. Residues His-505 and Glu-507 contribute to the active site.

It belongs to the CTP synthase family. Homotetramer.

It catalyses the reaction UTP + L-glutamine + ATP + H2O = CTP + L-glutamate + ADP + phosphate + 2 H(+). The enzyme catalyses L-glutamine + H2O = L-glutamate + NH4(+). It carries out the reaction UTP + NH4(+) + ATP = CTP + ADP + phosphate + 2 H(+). The protein operates within pyrimidine metabolism; CTP biosynthesis via de novo pathway; CTP from UDP: step 2/2. With respect to regulation, allosterically activated by GTP, when glutamine is the substrate; GTP has no effect on the reaction when ammonia is the substrate. The allosteric effector GTP functions by stabilizing the protein conformation that binds the tetrahedral intermediate(s) formed during glutamine hydrolysis. Inhibited by the product CTP, via allosteric rather than competitive inhibition. Functionally, catalyzes the ATP-dependent amination of UTP to CTP with either L-glutamine or ammonia as the source of nitrogen. Regulates intracellular CTP levels through interactions with the four ribonucleotide triphosphates. The chain is CTP synthase from Pyrococcus furiosus (strain ATCC 43587 / DSM 3638 / JCM 8422 / Vc1).